The primary structure comprises 594 residues: Elongation factor 4 (594 aa).

A tr-type G domain is found at 2–184; sequence KNIRNFSIIA…TIVAKVPAPE (183 aa). Residues 14-19 and 131-134 contribute to the GTP site; these read DHGKST and NKID.

This sequence belongs to the TRAFAC class translation factor GTPase superfamily. Classic translation factor GTPase family. LepA subfamily.

It localises to the cell inner membrane. It carries out the reaction GTP + H2O = GDP + phosphate + H(+). Functionally, required for accurate and efficient protein synthesis under certain stress conditions. May act as a fidelity factor of the translation reaction, by catalyzing a one-codon backward translocation of tRNAs on improperly translocated ribosomes. Back-translocation proceeds from a post-translocation (POST) complex to a pre-translocation (PRE) complex, thus giving elongation factor G a second chance to translocate the tRNAs correctly. Binds to ribosomes in a GTP-dependent manner. This Francisella tularensis subsp. novicida (strain U112) protein is Elongation factor 4.